Here is a 548-residue protein sequence, read N- to C-terminus: GLC7-interacting protein 2 (548 aa).

The span at Met-1–Lys-23 shows a compositional bias: basic and acidic residues. Disordered stretches follow at residues Met-1–Glu-54 and Val-118–Pro-143. Phosphoserine is present on Ser-51. At Thr-52 the chain carries Phosphothreonine. At Ser-155 the chain carries Phosphoserine. The tract at residues Arg-191–Gly-212 is disordered. Ser-221 and Ser-238 each carry phosphoserine. The disordered stretch occupies residues Phe-293–Glu-346. The region spanning His-419 to Asp-534 is the CBM21 domain.

In terms of assembly, interacts with phosphatase 1 (GLC7).

The chain is GLC7-interacting protein 2 (GIP2) from Saccharomyces cerevisiae (strain ATCC 204508 / S288c) (Baker's yeast).